The primary structure comprises 468 residues: 23S rRNA (uracil(1939)-C(5))-methyltransferase RlmD (468 aa).

Positions 12–70 (SKQLSPKLSLNVTQLDHLGAGMAQHQGKVVFIPQALPGERVSVQLTDQKKSFAKAKLIK) constitute a TRAM domain. [4Fe-4S] cluster contacts are provided by Cys83, Cys89, Cys92, and Cys174. Gln296, Phe325, Asn330, Glu351, Asp378, and Asp398 together coordinate S-adenosyl-L-methionine. Cys424 serves as the catalytic Nucleophile.

It belongs to the class I-like SAM-binding methyltransferase superfamily. RNA M5U methyltransferase family. RlmD subfamily.

The catalysed reaction is uridine(1939) in 23S rRNA + S-adenosyl-L-methionine = 5-methyluridine(1939) in 23S rRNA + S-adenosyl-L-homocysteine + H(+). Its function is as follows. Catalyzes the formation of 5-methyl-uridine at position 1939 (m5U1939) in 23S rRNA. This Shewanella denitrificans (strain OS217 / ATCC BAA-1090 / DSM 15013) protein is 23S rRNA (uracil(1939)-C(5))-methyltransferase RlmD.